The following is a 389-amino-acid chain: Chalcone synthase (389 aa).

Catalysis depends on residues cysteine 164, histidine 303, and asparagine 336.

It belongs to the thiolase-like superfamily. Chalcone/stilbene synthases family. Homodimer. In terms of tissue distribution, mainly expressed in flowers, to a lower extent in young leaves, and barely in mature leaves and twigs.

It catalyses the reaction (E)-4-coumaroyl-CoA + 3 malonyl-CoA + 3 H(+) = 2',4,4',6'-tetrahydroxychalcone + 3 CO2 + 4 CoA. Its pathway is secondary metabolite biosynthesis; flavonoid biosynthesis. The primary product of this enzyme is 4,2',4',6'-tetrahydroxychalcone (also termed naringenin-chalcone or chalcone) which can under specific conditions spontaneously isomerize into naringenin. In Rhododendron dauricum (Azalea daurica), this protein is Chalcone synthase.